The primary structure comprises 102 residues: NADH-quinone oxidoreductase subunit K 1 (102 aa).

A run of 3 helical transmembrane segments spans residues 5-25, 30-50, and 62-82; these read LLHV…CVLV, IIMM…AFVG, and VFAL…LALV.

Belongs to the complex I subunit 4L family. As to quaternary structure, NDH-1 is composed of 14 different subunits. Subunits NuoA, H, J, K, L, M, N constitute the membrane sector of the complex.

The protein resides in the cell inner membrane. The catalysed reaction is a quinone + NADH + 5 H(+)(in) = a quinol + NAD(+) + 4 H(+)(out). In terms of biological role, NDH-1 shuttles electrons from NADH, via FMN and iron-sulfur (Fe-S) centers, to quinones in the respiratory chain. The immediate electron acceptor for the enzyme in this species is believed to be ubiquinone. Couples the redox reaction to proton translocation (for every two electrons transferred, four hydrogen ions are translocated across the cytoplasmic membrane), and thus conserves the redox energy in a proton gradient. The protein is NADH-quinone oxidoreductase subunit K 1 of Geotalea uraniireducens (strain Rf4) (Geobacter uraniireducens).